The following is a 282-amino-acid chain: Serine/arginine-rich splicing factor 8 (282 aa).

Ser-2 is modified (N-acetylserine). Phosphoserine is present on residues Ser-2 and Ser-26. The RRM domain maps to 14 to 92 (ITLKVDNLTY…RELRVQVARY (79 aa)). Residues 91-282 (RYGRRDLPRS…SPEEEGQMSS (192 aa)) form a disordered region. Over residues 93 to 107 (GRRDLPRSRQGEPRG) the composition is skewed to basic and acidic residues. 2 stretches are compositionally biased toward basic residues: residues 116-136 (RRSRSYGRRSRSPRRRHRSRS) and 144-154 (SRSRSRYRGSR). Composition is skewed to low complexity over residues 155 to 177 (YSRSPYSRSPYSRSRYSRSPYSR) and 185 to 200 (YGGSHYSSSGYSNSRY). Residues Ser-156, Ser-158, Ser-171, Ser-173, and Ser-196 each carry the phosphoserine modification. The span at 201-210 (SRYHSSRSHS) shows a compositional bias: basic residues. Low complexity-rich tracts occupy residues 211 to 227 (KSGSSTSSRSASTSKSS) and 234 to 255 (SSSVSRSRSRSRSSSMTRSPPR). The segment covering 256 to 271 (VSKRKSKSRSRSKRPP) has biased composition (basic residues). Phosphoserine is present on Ser-273.

This sequence belongs to the splicing factor SR family. Strongly expressed in pancreas, spleen and prostate. Weakly expressed in lung, liver and thymus.

Its subcellular location is the nucleus. Involved in pre-mRNA alternative splicing. The chain is Serine/arginine-rich splicing factor 8 (SRSF8) from Homo sapiens (Human).